Consider the following 88-residue polypeptide: DNA-directed RNA polymerase subunit omega (88 aa).

This sequence belongs to the RNA polymerase subunit omega family. As to quaternary structure, the RNAP catalytic core consists of 2 alpha, 1 beta, 1 beta' and 1 omega subunit. When a sigma factor is associated with the core the holoenzyme is formed, which can initiate transcription.

The enzyme catalyses RNA(n) + a ribonucleoside 5'-triphosphate = RNA(n+1) + diphosphate. Its function is as follows. Promotes RNA polymerase assembly. Latches the N- and C-terminal regions of the beta' subunit thereby facilitating its interaction with the beta and alpha subunits. In Salinispora arenicola (strain CNS-205), this protein is DNA-directed RNA polymerase subunit omega.